We begin with the raw amino-acid sequence, 190 residues long: Ribonuclease HII (190 aa).

The RNase H type-2 domain maps to 1–190 (MAGVDEVGRG…FCRKIIENPD (190 aa)). Aspartate 5, glutamate 6, and aspartate 101 together coordinate a divalent metal cation.

The protein belongs to the RNase HII family. The cofactor is Mn(2+). Mg(2+) serves as cofactor.

It localises to the cytoplasm. It carries out the reaction Endonucleolytic cleavage to 5'-phosphomonoester.. Functionally, endonuclease that specifically degrades the RNA of RNA-DNA hybrids. This Synechocystis sp. (strain ATCC 27184 / PCC 6803 / Kazusa) protein is Ribonuclease HII (rnhB).